The sequence spans 332 residues: 2,3-diketo-L-gulonate reductase (332 aa).

The active-site Proton donor is His-44. Residues 168 to 174, 224 to 225, and 304 to 306 contribute to the NAD(+) site; these read ITMVDMS, WK, and GHE.

Belongs to the LDH2/MDH2 oxidoreductase family. DlgD subfamily. In terms of assembly, homodimer.

The protein localises to the cytoplasm. The catalysed reaction is 3-dehydro-L-gulonate + NAD(+) = 2,3-dioxo-L-gulonate + NADH + H(+). It carries out the reaction 3-dehydro-L-gulonate + NADP(+) = 2,3-dioxo-L-gulonate + NADPH + H(+). Functionally, catalyzes the reduction of 2,3-diketo-L-gulonate in the presence of NADH, to form 3-keto-L-gulonate. This is 2,3-diketo-L-gulonate reductase from Mannheimia succiniciproducens (strain KCTC 0769BP / MBEL55E).